Reading from the N-terminus, the 508-residue chain is MNTVSPAKKKVIIIGAGIAGLKAASTLHQNGIQDCLVLEARDRVGGRLQTVTGYQGRKYDIGASWHHDTLTNPLFLEEAQLSLNDGRTRFVFDDDNFIYIDEERGRVDHDKELLLEIVDNEMSKFAELEFHQHLGVSDCSFFQLVMKYLLQRRQFLTNDQIRYLPQLCRYLELWHGLDWKLLSAKDTYFGHQGRNAFALNYDSVVQRIAQSFPQNWLKLSCEVKSITREPSKNVTVNCEDGTVYNADYVIITVPQSVLNLSVQPEKNLRGRIEFQPPLKPVIQDAFDKIHFGALGKVIFEFEECCWSNESSKIVTLANSTNEFVEIVRNAENLDELDSMLEREDSQKHTSVTCWSQPLFFVNLSKSTGVASFMMLMQAPLTNHIESIREDKERLFSFFQPVLNKIMKCLDSEDVIDGMRPIENIANANKPVLRNIIVSNWTRDPYSRGAYSACFPGDDPVDMVVAMSNGQDSRIRFAGEHTIMDGAGCAYGAWESGRREATRISDLLK.

Belongs to the flavin monoamine oxidase family. The cofactor is FAD.

The catalysed reaction is spermine + O2 + H2O = 3-aminopropanal + spermidine + H2O2. The enzyme catalyses spermidine + O2 + H2O = 3-aminopropanal + putrescine + H2O2. It catalyses the reaction N(1)-acetylspermine + O2 + H2O = 3-acetamidopropanal + spermidine + H2O2. It carries out the reaction N(1)-acetylspermidine + O2 + H2O = 3-acetamidopropanal + putrescine + H2O2. The catalysed reaction is N(8)-acetylspermidine + O2 + H2O = 4-acetamidobutanal + propane-1,3-diamine + H2O2. Functionally, involved in the production of beta-alanine, a precursor of pantothenic acid. Multicopy suppressor of fenpropimorph resistance. The sequence is that of Polyamine oxidase FMS1 (FMS1) from Saccharomyces cerevisiae (strain ATCC 204508 / S288c) (Baker's yeast).